Consider the following 365-residue polypeptide: Protein RecA (365 aa).

Residue 73-80 (GPESSGKT) participates in ATP binding.

It belongs to the RecA family.

It localises to the cytoplasm. In terms of biological role, can catalyze the hydrolysis of ATP in the presence of single-stranded DNA, the ATP-dependent uptake of single-stranded DNA by duplex DNA, and the ATP-dependent hybridization of homologous single-stranded DNAs. It interacts with LexA causing its activation and leading to its autocatalytic cleavage. The sequence is that of Protein RecA from Prochlorococcus marinus (strain MIT 9312).